Here is a 128-residue protein sequence, read N- to C-terminus: SH2 domain-containing protein 1A (128 aa).

Residues 6–102 (VYHGKISRET…GIVIPLQYPV (97 aa)) form the SH2 domain. The segment at 67 to 92 (ETAPGVHKRFFRKIKNLISAFQKPDQ) is interaction with FYN SH3 domain. Lys-89 bears the N6-acetyllysine mark. Positions 104–128 (KKPSARSTQGATGRRDDPDVFLKTP) are disordered. Basic and acidic residues predominate over residues 116 to 128 (GRRDDPDVFLKTP).

As to quaternary structure, interacts with CD84, CD244, LY9, SLAMF1 and FYN. Interacts with NTRK1, NTRK2 and NTRK3.

It is found in the cytoplasm. Cytoplasmic adapter regulating receptors of the signaling lymphocytic activation molecule (SLAM) family such as SLAMF1, CD244, LY9, CD84, SLAMF6 and SLAMF7. In SLAM signaling seems to cooperate with SH2D1B/EAT-2. Initially it has been proposed that association with SLAMF1 prevents SLAMF1 binding to inhibitory effectors including INPP5D/SHIP1 and PTPN11/SHP-2. However, by simultaneous interactions, recruits FYN which subsequently phosphorylates and activates SLAMF1. Positively regulates CD244/2B4- and CD84-mediated natural killer (NK) cell functions. Can also promote CD48-, SLAMF6 -, LY9-, and SLAMF7-mediated NK cell activation. In the context of NK cell-mediated cytotoxicity enhances conjugate formation with target cells. May also regulate the activity of the neurotrophin receptors NTRK1, NTRK2 and NTRK3. The sequence is that of SH2 domain-containing protein 1A (SH2D1A) from Bos taurus (Bovine).